A 48-amino-acid polypeptide reads, in one-letter code: Cytochrome b559 subunit beta (48 aa).

Residues Trp23–Ala39 traverse the membrane as a helical segment. Position 27 (His27) interacts with heme.

This sequence belongs to the PsbE/PsbF family. In terms of assembly, heterodimer of an alpha subunit and a beta subunit. PSII is composed of 1 copy each of membrane proteins PsbA, PsbB, PsbC, PsbD, PsbE, PsbF, PsbH, PsbI, PsbJ, PsbK, PsbL, PsbM, PsbT, PsbX, PsbY, Psb30/Ycf12, peripheral proteins PsbO, CyanoQ (PsbQ), PsbU, PsbV and a large number of cofactors. It forms dimeric complexes. Heme b is required as a cofactor.

The protein resides in the cellular thylakoid membrane. This b-type cytochrome is tightly associated with the reaction center of photosystem II (PSII). PSII is a light-driven water:plastoquinone oxidoreductase that uses light energy to abstract electrons from H(2)O, generating O(2) and a proton gradient subsequently used for ATP formation. It consists of a core antenna complex that captures photons, and an electron transfer chain that converts photonic excitation into a charge separation. The chain is Cytochrome b559 subunit beta from Prochlorococcus marinus (strain SARG / CCMP1375 / SS120).